We begin with the raw amino-acid sequence, 271 residues long: Short chain dehydrogenase asqE (271 aa).

The NADP(+) site is built by Ile-22, Asp-70, and Asn-99. Active-site proton donor residues include Ser-152 and Ser-153. The NADP(+) site is built by Tyr-167, Lys-171, and Thr-203. Tyr-167 functions as the Proton acceptor in the catalytic mechanism. Residue Lys-171 is the Lowers pKa of active site Tyr of the active site.

It belongs to the short-chain dehydrogenases/reductases (SDR) family.

The enzyme catalyses a primary alcohol + NAD(+) = an aldehyde + NADH + H(+). It catalyses the reaction a secondary alcohol + NAD(+) = a ketone + NADH + H(+). It functions in the pathway secondary metabolite biosynthesis. The protein operates within alkaloid biosynthesis. It participates in mycotoxin biosynthesis. In terms of biological role, short chain dehydrogenase; part of the gene cluster that mediates the biosynthesis of the aspoquinolone mycotoxins. The role of asqE within the aspoquinolone pathway has still to be determined. The first step of the pathway is catalyzed by the nonribosomal peptide synthetase asqK that condenses anthranilic acid and O-methyl-L-tyrosine to produce 4'-methoxycyclopeptin. 4'-methoxycyclopeptin is then converted to 4'-methoxydehydrocyclopeptin by the ketoglutarate-dependent dioxygenase asqJ. AsqJ also converts its first product 4'-methoxydehydrocyclopeptin to 4'-methoxycyclopenin. The following conversion of 4'-methoxycyclopenin into 4'-methoxyviridicatin is catalyzed by the cyclopenase asqI. 4'-methoxyviridicatin is the precursor of quinolone natural products, and is further converted to quinolinone B. The prenyltransferase asqH1 then catalyzes the canonical Friedel-Crafts alkylation of quinolinone B with dimethylallyl cation to yield dimethylallyl quinolone, which is subjected to FAD-dependent dehydrogenation by the FAD-linked oxidoreductase asqF to yield conjugated aryl diene. The delta(3') double bond then serves as the site of the second alkylation with DMAPP catalyzed by the prenyltransferase asqH2 to yield a carbenium ion intermediate, which can be attacked by H(2)O to yield a styrenyl quinolone containing a C3'-hydroxyprenyl chain. The FAD-dependent monooxygenase asqG performs epoxidation of the terminal C7'-C8' olefin. Finally, after dehydratation of the epoxide at C3 by asqC, the quinolone epoxide rearrangement protein asqO catalyzes an enzymatic 3-exo-tet cyclization to yield the cyclopropyl-THF ring system in aspoquinolone. This Emericella nidulans (strain FGSC A4 / ATCC 38163 / CBS 112.46 / NRRL 194 / M139) (Aspergillus nidulans) protein is Short chain dehydrogenase asqE.